The primary structure comprises 405 residues: Diaminopimelate decarboxylase (405 aa).

Lys46 carries the N6-(pyridoxal phosphate)lysine modification. Residues Gly225 and 259 to 262 (EPGR) each bind pyridoxal 5'-phosphate. Residues Arg262, Arg298, and Tyr302 each coordinate substrate. The active-site Proton donor is Cys329. Residues Glu330 and Tyr358 each contribute to the substrate site. A pyridoxal 5'-phosphate-binding site is contributed by Tyr358.

It belongs to the Orn/Lys/Arg decarboxylase class-II family. LysA subfamily. As to quaternary structure, homodimer. The cofactor is pyridoxal 5'-phosphate.

The enzyme catalyses meso-2,6-diaminopimelate + H(+) = L-lysine + CO2. It functions in the pathway amino-acid biosynthesis; L-lysine biosynthesis via DAP pathway; L-lysine from DL-2,6-diaminopimelate: step 1/1. In terms of biological role, specifically catalyzes the decarboxylation of meso-diaminopimelate (meso-DAP) to L-lysine. This is Diaminopimelate decarboxylase from Helicobacter pylori (strain J99 / ATCC 700824) (Campylobacter pylori J99).